Consider the following 502-residue polypeptide: Probable glycine dehydrogenase (decarboxylating) subunit 2 (502 aa).

K273 is subject to N6-(pyridoxal phosphate)lysine.

This sequence belongs to the GcvP family. C-terminal subunit subfamily. In terms of assembly, the glycine cleavage system is composed of four proteins: P, T, L and H. In this organism, the P 'protein' is a heterodimer of two subunits. Pyridoxal 5'-phosphate serves as cofactor.

The catalysed reaction is N(6)-[(R)-lipoyl]-L-lysyl-[glycine-cleavage complex H protein] + glycine + H(+) = N(6)-[(R)-S(8)-aminomethyldihydrolipoyl]-L-lysyl-[glycine-cleavage complex H protein] + CO2. The glycine cleavage system catalyzes the degradation of glycine. The P protein binds the alpha-amino group of glycine through its pyridoxal phosphate cofactor; CO(2) is released and the remaining methylamine moiety is then transferred to the lipoamide cofactor of the H protein. The protein is Probable glycine dehydrogenase (decarboxylating) subunit 2 of Thermococcus gammatolerans (strain DSM 15229 / JCM 11827 / EJ3).